The primary structure comprises 306 residues: Protein farnesyltransferase/geranylgeranyltransferase type-1 subunit alpha (306 aa).

PFTA repeat units lie at residues 48-82, 84-118, 125-159, 161-195, and 201-235; these read YSER…NLPN, NLYD…QIME, DPYR…TFDL, NDAK…SKKH, and TIDE…RFDR.

It belongs to the protein prenyltransferase subunit alpha family. In terms of assembly, heterodimer of an alpha and a beta subunit. It depends on Mg(2+) as a cofactor.

The catalysed reaction is L-cysteinyl-[protein] + (2E,6E)-farnesyl diphosphate = S-(2E,6E)-farnesyl-L-cysteinyl-[protein] + diphosphate. It catalyses the reaction geranylgeranyl diphosphate + L-cysteinyl-[protein] = S-geranylgeranyl-L-cysteinyl-[protein] + diphosphate. Its function is as follows. Essential subunit of both the farnesyltransferase and the geranylgeranyltransferase complex. Contributes to the transfer of a farnesyl or geranylgeranyl moiety from farnesyl or geranylgeranyl diphosphate to a cysteine at the fourth position from the C-terminus of several proteins having the C-terminal sequence Cys-aliphatic-aliphatic-X. This Candida albicans (Yeast) protein is Protein farnesyltransferase/geranylgeranyltransferase type-1 subunit alpha (RAM2).